A 239-amino-acid chain; its full sequence is Exosome complex component Rrp41 (239 aa).

Residues M1–P21 are disordered.

Belongs to the RNase PH family. Rrp41 subfamily. In terms of assembly, component of the archaeal exosome complex. Forms a hexameric ring-like arrangement composed of 3 Rrp41-Rrp42 heterodimers. The hexameric ring associates with a trimer of Rrp4 and/or Csl4 subunits.

The protein resides in the cytoplasm. Functionally, catalytic component of the exosome, which is a complex involved in RNA degradation. Has 3'-&gt;5' exoribonuclease activity. Can also synthesize heteromeric RNA-tails. The polypeptide is Exosome complex component Rrp41 (Methanopyrus kandleri (strain AV19 / DSM 6324 / JCM 9639 / NBRC 100938)).